The chain runs to 354 residues: Uroporphyrinogen decarboxylase (354 aa).

Substrate contacts are provided by residues 25–29 (RQAGR), F44, D75, Y152, T207, and H330.

The protein belongs to the uroporphyrinogen decarboxylase family. Homodimer.

It localises to the cytoplasm. The enzyme catalyses uroporphyrinogen III + 4 H(+) = coproporphyrinogen III + 4 CO2. It participates in porphyrin-containing compound metabolism; protoporphyrin-IX biosynthesis; coproporphyrinogen-III from 5-aminolevulinate: step 4/4. Catalyzes the decarboxylation of four acetate groups of uroporphyrinogen-III to yield coproporphyrinogen-III. The chain is Uroporphyrinogen decarboxylase from Xanthomonas axonopodis pv. citri (strain 306).